Reading from the N-terminus, the 128-residue chain is Small nuclear ribonucleoprotein SmD3a (128 aa).

Residues 7-79 (IPVKLLHESS…VRFLVIPDML (73 aa)) enclose the Sm domain. Residues 90–128 (GKGKSASLGVGRGRGAAMRAKGTGRGTGGGRGAVPPVRR) form a disordered region. A compositionally biased stretch (gly residues) spans 112 to 121 (TGRGTGGGRG).

Belongs to the snRNP core protein family. In terms of tissue distribution, expressed in young seedlings, roots, leaves, flowers and immature siliques.

Its subcellular location is the cytoplasm. It is found in the cytosol. It localises to the nucleus. Its function is as follows. Core component of the spliceosomal U1, U2, U4 and U5 small nuclear ribonucleoproteins (snRNPs), the building blocks of the spliceosome. May play a minor role in the splicing of cellular pre-mRNAs. The sequence is that of Small nuclear ribonucleoprotein SmD3a from Arabidopsis thaliana (Mouse-ear cress).